The chain runs to 466 residues: Coagulation factor VII (466 aa).

A signal peptide spans 1–20; sequence MVSQALRLLCLLLGLQGCLA. The propeptide occupies 21–60; the sequence is AGGVAKASGGETRDMPWKPGPHRVFVTQEEAHGVLHRRRR. The 45-residue stretch at 61-105 folds into the Gla domain; it reads ANAFLEELRPGSLERECKEEQCSFEEAREIFKDAERTKLFWISYS. A 4-carboxyglutamate mark is found at Glu-66, Glu-67, Glu-74, Glu-76, Glu-79, Glu-80, Glu-85, Glu-86, Glu-89, and Glu-95. A disulfide bridge connects residues Cys-77 and Cys-82. One can recognise an EGF-like 1; calcium-binding domain in the interval 106–142; sequence DGDQCASSPCQNGGSCKDQLQSYICFCLPAFEGRNCE. 10 cysteine pairs are disulfide-bonded: Cys-110–Cys-121, Cys-115–Cys-130, Cys-132–Cys-141, Cys-151–Cys-162, Cys-158–Cys-172, Cys-174–Cys-187, Cys-195–Cys-322, Cys-219–Cys-224, Cys-238–Cys-254, and Cys-370–Cys-389. The O-linked (Glc...) serine; alternate glycan is linked to Ser-112. Ser-112 is a glycosylation site (O-linked (Xyl...) serine; alternate). Residue Ser-120 is glycosylated (O-linked (Fuc) serine). Position 123 is a (3R)-3-hydroxyaspartate (Asp-123). The EGF-like 2 domain occupies 147–188; sequence DQLICVNENGGCEQYCSDHTGTKRSCRCHEGYSLLADGVSCT. The N-linked (GlcNAc...) asparagine glycan is linked to Asn-205. In terms of domain architecture, Peptidase S1 spans 213–452; it reads IVGGKVCPKG…YIEWLQKLMR (240 aa). Residues His-253 and Asp-302 each act as charge relay system in the active site. N-linked (GlcNAc...) asparagine glycosylation is present at Asn-382. Residue Asp-398 coordinates substrate. An intrachain disulfide couples Cys-400 to Cys-428. Ser-404 acts as the Charge relay system in catalysis.

Belongs to the peptidase S1 family. Heterodimer of a light chain and a heavy chain linked by a disulfide bond. Interacts (activated) with iripin-8, a serine protease inhibitor from Ixodes ricinus saliva. Post-translationally, the vitamin K-dependent, enzymatic carboxylation of some glutamate residues allows the modified protein to bind calcium. The iron and 2-oxoglutarate dependent 3-hydroxylation of aspartate and asparagine is (R) stereospecific within EGF domains. In terms of processing, O- and N-glycosylated. N-glycosylation at Asn-205 occurs cotranslationally and is mediated by STT3A-containing complexes, while glycosylation at Asn-382 is post-translational and is mediated STT3B-containing complexes before folding. O-fucosylated by POFUT1 on a conserved serine or threonine residue found in the consensus sequence C2-X(4,5)-[S/T]-C3 of EGF domains, where C2 and C3 are the second and third conserved cysteines. Post-translationally, can be either O-glucosylated or O-xylosylated at Ser-112 by POGLUT1 in vitro. In terms of tissue distribution, plasma.

The protein localises to the secreted. It catalyses the reaction Selective cleavage of Arg-|-Ile bond in factor X to form factor Xa.. Initiates the extrinsic pathway of blood coagulation. Serine protease that circulates in the blood in a zymogen form. Factor VII is converted to factor VIIa by factor Xa, factor XIIa, factor IXa, or thrombin by minor proteolysis. In the presence of tissue factor and calcium ions, factor VIIa then converts factor X to factor Xa by limited proteolysis. Factor VIIa also converts factor IX to factor IXa in the presence of tissue factor and calcium. In Homo sapiens (Human), this protein is Coagulation factor VII (F7).